The following is a 527-amino-acid chain: tRNA pseudouridine synthase Pus10 (527 aa).

The Zn(2+) site is built by Cys21 and Cys24. The stretch at 42 to 87 (KELLNELQKFLEPEKPELILEAPNPPLKKIRLHEDGIDNLSEDGKE) forms a coiled coil. Ser82 bears the Phosphoserine mark. Cys107 and Cys110 together coordinate Zn(2+). Positions 302-315 (TPWIIDGERKMESS) are RNA binding forefinger loop. The active-site Nucleophile is Asp342. Residues 440–455 (QKTPLRVLHRRPLAVR) are RNA binding thumb loop.

Belongs to the pseudouridine synthase Pus10 family. Interacts with components of the microprocessor complex DROSHA and DGCR8. In terms of processing, proteolytically cleaved during TRAIL-induced cell death. Cleaved, in vitro, either by caspase-3 (CASP3) or caspase-8 (CASP8).

It localises to the nucleus. The protein resides in the cytoplasm. Its subcellular location is the mitochondrion. It carries out the reaction uridine(55) in tRNA = pseudouridine(55) in tRNA. The catalysed reaction is uridine(54) in tRNA = pseudouridine(54) in tRNA. Functionally, protein with different functions depending on its subcellular location: involved in miRNA processing in the nucleus and acts as a tRNA pseudouridylate synthase in the cytoplasm. In the cytoplasm, acts as a pseudouridylate synthase by catalyzing synthesis of pseudouridine(54) and pseudouridine(55) from uracil-54 and uracil-55, respectively, in the psi GC loop of a subset of tRNAs. tRNA pseudouridylate synthase activity is enhanced by the presence of 1-methyladenosine at position 53-61 of tRNAs. Does not show tRNA pseudouridylate synthase activity in the nucleus. In the nucleus, promotes primary microRNAs (pri-miRNAs) processing independently of its RNA pseudouridylate synthase activity. Binds pri-miRNAs. Modulator of TRAIL/TNFSF10-induced cell death via activation of procaspase-8 and BID cleavage. Required for the progression of the apoptotic signal through intrinsic mitochondrial cell death. The protein is tRNA pseudouridine synthase Pus10 of Mus musculus (Mouse).